The sequence spans 148 residues: UPF0260 protein PM0539 (148 aa).

This sequence belongs to the UPF0260 family.

This is UPF0260 protein PM0539 from Pasteurella multocida (strain Pm70).